The chain runs to 284 residues: Tropomyosin (284 aa).

Residues 1 to 284 adopt a coiled-coil conformation; the sequence is MDAIKKKMQA…DQTFQELSGY (284 aa). Positions 110–142 are enriched in basic and acidic residues; that stretch reads TAKLEEATHTADESERVRKVMENRSFQDEERAN. Positions 110–143 are disordered; that stretch reads TAKLEEATHTADESERVRKVMENRSFQDEERANT.

It belongs to the tropomyosin family.

In terms of biological role, tropomyosin, in association with the troponin complex, plays a central role in the calcium dependent regulation of muscle contraction. This is Tropomyosin from Anisakis simplex (Herring worm).